The following is a 273-amino-acid chain: Cell division protein FtsQ (273 aa).

Residues 1 to 10 (MWNDARTINL) lie on the Cytoplasmic side of the membrane. Residues 11-31 (IANTLAVLAVAAMLLAGVAWV) form a helical membrane-spanning segment. Residues 32–273 (AQRPYFTLAA…HSKSKPAKKR (242 aa)) lie on the Periplasmic side of the membrane. A POTRA domain is found at 37–110 (FTLAAIEIES…NTLRVRVEEQ (74 aa)).

Belongs to the FtsQ/DivIB family. FtsQ subfamily. Part of a complex composed of FtsB, FtsL and FtsQ.

It localises to the cell inner membrane. Its function is as follows. Essential cell division protein. May link together the upstream cell division proteins, which are predominantly cytoplasmic, with the downstream cell division proteins, which are predominantly periplasmic. May control correct divisome assembly. The protein is Cell division protein FtsQ of Bordetella pertussis (strain Tohama I / ATCC BAA-589 / NCTC 13251).